Consider the following 114-residue polypeptide: Beta-microseminoprotein E1 (114 aa).

Residues 1-20 form the signal peptide; it reads MNVLLGGLVIFATFVTLCNG. 5 disulfide bridges follow: cysteine 22–cysteine 70, cysteine 38–cysteine 62, cysteine 57–cysteine 93, cysteine 60–cysteine 69, and cysteine 84–cysteine 107.

The protein belongs to the beta-microseminoprotein family.

The protein resides in the secreted. The polypeptide is Beta-microseminoprotein E1 (MSPE) (Saguinus oedipus (Cotton-top tamarin)).